The following is a 165-amino-acid chain: NADPH-dependent 7-cyano-7-deazaguanine reductase (165 aa).

Cys56 acts as the Thioimide intermediate in catalysis. Asp63 acts as the Proton donor in catalysis. Substrate is bound by residues 78-80 (VES) and 97-98 (HE).

The protein belongs to the GTP cyclohydrolase I family. QueF type 1 subfamily.

It is found in the cytoplasm. It carries out the reaction 7-aminomethyl-7-carbaguanine + 2 NADP(+) = 7-cyano-7-deazaguanine + 2 NADPH + 3 H(+). It participates in tRNA modification; tRNA-queuosine biosynthesis. Catalyzes the NADPH-dependent reduction of 7-cyano-7-deazaguanine (preQ0) to 7-aminomethyl-7-deazaguanine (preQ1). The sequence is that of NADPH-dependent 7-cyano-7-deazaguanine reductase from Bacillus cytotoxicus (strain DSM 22905 / CIP 110041 / 391-98 / NVH 391-98).